A 637-amino-acid polypeptide reads, in one-letter code: Limonene/alpha-pinene synthase, chloroplastic (637 aa).

The N-terminal 56 residues, 1–56 (MALLSIVSLQVPKSCGLKSLISSSNVQKALCISTAVPTLRMRRRQKALVINMKLTT), are a transit peptide targeting the chloroplast. Residues Asp-388, Asp-392, and Asp-540 each coordinate Mg(2+). The short motif at 388–392 (DDMYD) is the DDXXD motif element.

This sequence belongs to the terpene synthase family. Tpsd subfamily. Requires Mg(2+) as cofactor. Mn(2+) serves as cofactor. It depends on K(+) as a cofactor.

The protein resides in the plastid. Its subcellular location is the chloroplast. The catalysed reaction is (2E)-geranyl diphosphate = (4S)-limonene + diphosphate. The enzyme catalyses (2E)-geranyl diphosphate = (1S,5S)-alpha-pinene + diphosphate. Its pathway is terpene metabolism; oleoresin biosynthesis. In terms of biological role, involved in defensive oleoresin formation in conifers in response to insect attack or other injury. Involved in monoterpene (C10) olefins biosynthesis. The polypeptide is Limonene/alpha-pinene synthase, chloroplastic (ag11) (Abies grandis (Grand fir)).